The primary structure comprises 160 residues: Type IV major fimbrial protein FimA (160 aa).

Residues 1-7 constitute a propeptide, leader sequence; the sequence is MKSLQKG. F8 carries the N-methylphenylalanine modification. A helical membrane pass occupies residues 8 to 28; sequence FTLIELMIVVAIIGILAAFAI. A disulfide bridge links C63 with C105.

Belongs to the N-Me-Phe pilin family. As to quaternary structure, the pili are polar flexible filaments of about 5.4 nanometers diameter and 2.5 micrometers average length; they consist of only a single polypeptide chain arranged in a helical configuration of five subunits per turn in the assembled pilus.

It localises to the fimbrium. The protein localises to the membrane. Functionally, major component of the type IV fimbriae that plays an essential role in twitching motility, natural transformation, and protease secretion. The polypeptide is Type IV major fimbrial protein FimA (fimA) (Dichelobacter nodosus (Bacteroides nodosus)).